Reading from the N-terminus, the 180-residue chain is Non-specific lipid transfer protein GPI-anchored 3 (180 aa).

Residues 1–22 (MEAVRFAVAVVLVFCYVTSSNA) form the signal peptide. Disulfide bonds link Cys41/Cys78, Cys48/Cys62, Cys63/Cys104, and Cys76/Cys113. N-linked (GlcNAc...) asparagine glycans are attached at residues Asn91 and Asn120. Composition is skewed to low complexity over residues 116-125 (SAGTNSSSTP) and 133-156 (PASSTSTGTGSGSTGNAAPSTAKP). Positions 116–156 (SAGTNSSSTPPATPKTPPASSTSTGTGSGSTGNAAPSTAKP) are disordered. Ser158 is lipidated: GPI-anchor amidated serine. The propeptide at 159 to 180 (SAPAINFGGLSFASAVVATLFF) is removed in mature form.

Belongs to the plant LTP family. In terms of tissue distribution, restricted to stamen, pollen and sporophytic tissues. Also detected, at low levels, in stems and leaves.

The protein resides in the cell membrane. Its function is as follows. Lipid transfer protein involved in seed and ovule maturation and development, probably by regulating the fatty acids homeostasis during suberin and sporopollenin biosynthesis or deposition. The protein is Non-specific lipid transfer protein GPI-anchored 3 of Arabidopsis thaliana (Mouse-ear cress).